Here is a 449-residue protein sequence, read N- to C-terminus: Tubulin alpha-2B chain (449 aa).

Gln11 provides a ligand contact to GTP. N6-acetyllysine is present on Lys40. Positions 71, 140, 144, 145, 179, 206, and 228 each coordinate GTP. Residue Glu71 coordinates Mg(2+). Residue Glu254 is part of the active site.

It belongs to the tubulin family. As to quaternary structure, dimer of alpha and beta chains. A typical microtubule is a hollow water-filled tube with an outer diameter of 25 nm and an inner diameter of 15 nM. Alpha-beta heterodimers associate head-to-tail to form protofilaments running lengthwise along the microtubule wall with the beta-tubulin subunit facing the microtubule plus end conferring a structural polarity. Microtubules usually have 13 protofilaments but different protofilament numbers can be found in some organisms and specialized cells. The cofactor is Mg(2+). Acetylation of alpha chains at Lys-40 stabilizes microtubules and affects affinity and processivity of microtubule motors. This modification has a role in multiple cellular functions, ranging from cell motility, cell cycle progression or cell differentiation to intracellular trafficking and signaling.

The protein resides in the cytoplasm. It localises to the cytoskeleton. The protein localises to the spindle. It is found in the nucleus. It carries out the reaction GTP + H2O = GDP + phosphate + H(+). Functionally, tubulin is the major constituent of microtubules, a cylinder consisting of laterally associated linear protofilaments composed of alpha- and beta-tubulin heterodimers. Microtubules grow by the addition of GTP-tubulin dimers to the microtubule end, where a stabilizing cap forms. Below the cap, tubulin dimers are in GDP-bound state, owing to GTPase activity of alpha-tubulin. This chain is Tubulin alpha-2B chain (ALTBE), found in Physarum polycephalum (Slime mold).